A 142-amino-acid chain; its full sequence is Nucleoside diphosphate kinase (142 aa).

Residues Lys11, Phe59, Arg87, Thr93, Arg104, and Asn114 each contribute to the ATP site. His117 functions as the Pros-phosphohistidine intermediate in the catalytic mechanism.

It belongs to the NDK family. As to quaternary structure, homotetramer. It depends on Mg(2+) as a cofactor.

It localises to the cytoplasm. It carries out the reaction a 2'-deoxyribonucleoside 5'-diphosphate + ATP = a 2'-deoxyribonucleoside 5'-triphosphate + ADP. The catalysed reaction is a ribonucleoside 5'-diphosphate + ATP = a ribonucleoside 5'-triphosphate + ADP. Major role in the synthesis of nucleoside triphosphates other than ATP. The ATP gamma phosphate is transferred to the NDP beta phosphate via a ping-pong mechanism, using a phosphorylated active-site intermediate. The chain is Nucleoside diphosphate kinase from Wigglesworthia glossinidia brevipalpis.